We begin with the raw amino-acid sequence, 309 residues long: NADH-quinone oxidoreductase subunit C (309 aa).

Residues 198–309 (LPGDEKAVPP…RTRKKKEDGE (112 aa)) are disordered. Basic and acidic residues predominate over residues 220 to 230 (TKGDAKADVPK). Over residues 246–261 (DAAAKPVAEAAAPAAT) the composition is skewed to low complexity.

The protein belongs to the complex I 30 kDa subunit family. As to quaternary structure, NDH-1 is composed of 14 different subunits. Subunits NuoB, C, D, E, F, and G constitute the peripheral sector of the complex.

Its subcellular location is the cell inner membrane. The catalysed reaction is a quinone + NADH + 5 H(+)(in) = a quinol + NAD(+) + 4 H(+)(out). Functionally, NDH-1 shuttles electrons from NADH, via FMN and iron-sulfur (Fe-S) centers, to quinones in the respiratory chain. The immediate electron acceptor for the enzyme in this species is believed to be ubiquinone. Couples the redox reaction to proton translocation (for every two electrons transferred, four hydrogen ions are translocated across the cytoplasmic membrane), and thus conserves the redox energy in a proton gradient. In Novosphingobium aromaticivorans (strain ATCC 700278 / DSM 12444 / CCUG 56034 / CIP 105152 / NBRC 16084 / F199), this protein is NADH-quinone oxidoreductase subunit C.